Reading from the N-terminus, the 441-residue chain is Protein kinase C and casein kinase substrate in neurons protein 1 (441 aa).

Phosphoserine is present on residues Ser-2 and Ser-76. In terms of domain architecture, F-BAR spans 10 to 280 (EEITDSFWEV…AIRGADAQED (271 aa)). The stretch at 23-272 (KRTVKRIDDG…HVYRELEQAI (250 aa)) forms a coiled coil. Position 181 is a phosphothreonine (Thr-181). Residues 297 to 380 (PQFEEWNPDL…ANGGANPFED (84 aa)) form a disordered region. A compositionally biased stretch (basic and acidic residues) spans 311-321 (AKKEKQPKKAE). A compositionally biased stretch (polar residues) spans 324–355 (TLSNATGAVESTSQAGDRGSVSSYDRGQTYAT). Residues Ser-343, Ser-345, Ser-346, Ser-358, and Ser-362 each carry the phosphoserine modification. The 60-residue stretch at 382–441 (AKGVRVRALYDYDGQEQDELSFKAGDELTKLGEEDEQGWCRGRLDSGQLGLYPANYVEAI) folds into the SH3 domain. Tyr-391 carries the phosphotyrosine modification. Ser-402 and Ser-427 each carry phosphoserine.

It belongs to the PACSIN family. As to quaternary structure, homodimer. May form heterooligomers with other PACSINs. Interacts with both COBL and DBNL. Identified in a complex composed of COBL, PACSIN1 and WASL. Interacts with EHD3. Interacts (via SH3 domain) with SYNJ1 and WASL. Interacts (via SH3 domain) with DNM1; the interaction is reduced by DNM1 phosphorylation. Interacts with DNM2 and DNM3. Interacts with MAPT. Interacts with EHD1. Interacts with TRPV4. In terms of processing, phosphorylated by casein kinase 2 (CK2) and protein kinase C (PKC). As to expression, highly expressed in brain. Detected in hippocampus and dorsal root ganglion neurons. Detected in rod photoreceptor terminals in the outer plexiform layer of the retina (at protein level). In CNS neurons, high levels in the pyramidal cells of the hippocampus, Purkinje cells of the cerebellum and large neurons of the cortex and brain stem.

The protein localises to the cytoplasm. The protein resides in the cell projection. Its subcellular location is the synapse. It localises to the synaptosome. It is found in the ruffle membrane. The protein localises to the membrane. The protein resides in the cytoplasmic vesicle membrane. Its subcellular location is the cytosol. It localises to the cell membrane. Binds to membranes via its F-BAR domain and mediates membrane tubulation. Plays a role in the reorganization of the microtubule cytoskeleton via its interaction with MAPT; this decreases microtubule stability and inhibits MAPT-induced microtubule polymerization. Plays a role in cellular transport processes by recruiting DNM1, DNM2 and DNM3 to membranes. Plays a role in the reorganization of the actin cytoskeleton and in neuron morphogenesis via its interaction with COBL and WASL, and by recruiting COBL to the cell cortex. Plays a role in the regulation of neurite formation, neurite branching and the regulation of neurite length. Required for normal synaptic vesicle endocytosis; this process retrieves previously released neurotransmitters to accommodate multiple cycles of neurotransmission. Required for normal excitatory and inhibitory synaptic transmission. This is Protein kinase C and casein kinase substrate in neurons protein 1 (Pacsin1) from Mus musculus (Mouse).